Consider the following 318-residue polypeptide: Ribosomal RNA small subunit methyltransferase H (318 aa).

S-adenosyl-L-methionine is bound by residues 33–35, Asp53, Phe80, Asp101, and Gln108; that span reads GGH.

This sequence belongs to the methyltransferase superfamily. RsmH family.

It is found in the cytoplasm. It catalyses the reaction cytidine(1402) in 16S rRNA + S-adenosyl-L-methionine = N(4)-methylcytidine(1402) in 16S rRNA + S-adenosyl-L-homocysteine + H(+). Functionally, specifically methylates the N4 position of cytidine in position 1402 (C1402) of 16S rRNA. This is Ribosomal RNA small subunit methyltransferase H from Symbiobacterium thermophilum (strain DSM 24528 / JCM 14929 / IAM 14863 / T).